The primary structure comprises 299 residues: Protease HtpX homolog (299 aa).

2 consecutive transmembrane segments (helical) span residues 14-34 (ILVM…VGYL) and 39-59 (ATGG…IMVG). A Zn(2+)-binding site is contributed by His144. The active site involves Glu145. His148 is a binding site for Zn(2+). A run of 2 helical transmembrane segments spans residues 159 to 179 (IALA…NFMW) and 196 to 216 (VFAI…ATMV). A Zn(2+)-binding site is contributed by Glu225.

Belongs to the peptidase M48B family. Zn(2+) is required as a cofactor.

The protein resides in the cell membrane. The chain is Protease HtpX homolog from Limosilactobacillus fermentum (strain NBRC 3956 / LMG 18251) (Lactobacillus fermentum).